The chain runs to 217 residues: Uracil-DNA glycosylase (217 aa).

The active-site Proton acceptor is the Asp62.

It belongs to the uracil-DNA glycosylase (UDG) superfamily. UNG family.

The protein resides in the cytoplasm. The catalysed reaction is Hydrolyzes single-stranded DNA or mismatched double-stranded DNA and polynucleotides, releasing free uracil.. Its function is as follows. Excises uracil residues from the DNA which can arise as a result of misincorporation of dUMP residues by DNA polymerase or due to deamination of cytosine. The sequence is that of Uracil-DNA glycosylase from Streptococcus pyogenes serotype M3 (strain ATCC BAA-595 / MGAS315).